The following is a 505-amino-acid chain: Deoxyguanosinetriphosphate triphosphohydrolase (505 aa).

The HD domain occupies 66–273 (RLTHSLEVQQ…MEAADDISYC (208 aa)).

The protein belongs to the dGTPase family. Type 1 subfamily. Homotetramer. Mg(2+) is required as a cofactor.

It catalyses the reaction dGTP + H2O = 2'-deoxyguanosine + triphosphate + H(+). Its function is as follows. dGTPase preferentially hydrolyzes dGTP over the other canonical NTPs. The protein is Deoxyguanosinetriphosphate triphosphohydrolase of Yersinia enterocolitica serotype O:8 / biotype 1B (strain NCTC 13174 / 8081).